A 91-amino-acid polypeptide reads, in one-letter code: Probable Fe(2+)-trafficking protein (91 aa).

The protein belongs to the Fe(2+)-trafficking protein family.

In terms of biological role, could be a mediator in iron transactions between iron acquisition and iron-requiring processes, such as synthesis and/or repair of Fe-S clusters in biosynthetic enzymes. This is Probable Fe(2+)-trafficking protein from Mannheimia succiniciproducens (strain KCTC 0769BP / MBEL55E).